A 1331-amino-acid polypeptide reads, in one-letter code: uncharacterized protein (1331 aa).

8 helical membrane passes run Val-373–Val-393, Ala-487–Ile-507, Leu-534–Ile-554, Val-579–Leu-599, Leu-653–Thr-673, Val-1206–Ile-1226, Ile-1255–Leu-1275, and Ala-1297–Leu-1317.

This sequence belongs to the ABC-4 integral membrane protein family.

The protein localises to the cell membrane. This is an uncharacterized protein from Mycoplasma genitalium (strain ATCC 33530 / DSM 19775 / NCTC 10195 / G37) (Mycoplasmoides genitalium).